Consider the following 81-residue polypeptide: Photosystem I iron-sulfur center (81 aa).

4Fe-4S ferredoxin-type domains are found at residues 2-31 (SHSV…MVPW) and 37-68 (GQIA…VRVY). 8 residues coordinate [4Fe-4S] cluster: C11, C14, C17, C21, C48, C51, C54, and C58.

In terms of assembly, the cyanobacterial PSI reaction center is composed of one copy each of PsaA,B,C,D,E,F,I,J,K,L,M and X, and forms trimeric complexes. [4Fe-4S] cluster is required as a cofactor.

Its subcellular location is the cellular thylakoid membrane. The enzyme catalyses reduced [plastocyanin] + hnu + oxidized [2Fe-2S]-[ferredoxin] = oxidized [plastocyanin] + reduced [2Fe-2S]-[ferredoxin]. Functionally, apoprotein for the two 4Fe-4S centers FA and FB of photosystem I (PSI); essential for photochemical activity. FB is the terminal electron acceptor of PSI, donating electrons to ferredoxin. The C-terminus interacts with PsaA/B/D and helps assemble the protein into the PSI complex. Required for binding of PsaD and PsaE to PSI. PSI is a plastocyanin/cytochrome c6-ferredoxin oxidoreductase, converting photonic excitation into a charge separation, which transfers an electron from the donor P700 chlorophyll pair to the spectroscopically characterized acceptors A0, A1, FX, FA and FB in turn. This is Photosystem I iron-sulfur center from Prochlorococcus marinus (strain SARG / CCMP1375 / SS120).